The following is a 392-amino-acid chain: Sex-determining region Y protein (392 aa).

The interval 4–81 (HVKRPMNAFM…YKYQPHRRAK (78 aa)) is sufficient for interaction with KPNB1. Positions 5–73 (VKRPMNAFMV…LHREKYPNYK (69 aa)) form a DNA-binding region, HMG box. 2 required for nuclear localization regions span residues 6–22 (KRPM…ERHK) and 75–81 (QPHRRAK). A sufficient for interaction with EP300 region spans residues 52–84 (RPFFQEAQRLKILHREKYPNYKYQPHRRAKVSQ). Lys81 bears the N6-acetyllysine mark. A necessary for interaction with ZNF208 isoform KRAB-O region spans residues 92-144 (AVASTKLYNLLQWDRNPHAITYRQDWSRAAHLYSKNQQSFYWQPVDIPTGHLQ). The segment at 94-138 (ASTKLYNLLQWDRNPHAITYRQDWSRAAHLYSKNQQSFYWQPVDI) is necessary for interaction with SLC9A3R2 and nuclear accumulation of SLC9A3R2. Positions 142–361 (HLQQQQQQQQ…QQQQQQQQQQ (220 aa)) are disordered. Residues 144–181 (QQQQQQQQQQQFHNHHQQQQQFYDHHQQQQQQQQQQQQ) are compositionally biased toward low complexity. 2 stretches are compositionally biased toward basic and acidic residues: residues 182–197 (FHDH…DHHQ) and 210–228 (QEQQ…HDHQ). The segment covering 229–238 (QQQQQQQQQQ) has biased composition (low complexity). 3 stretches are compositionally biased toward basic and acidic residues: residues 239 to 250 (FHDHHQQKQQFH), 261 to 295 (FHDH…HDHP), and 313 to 349 (QFHD…DHHQ). Low complexity predominate over residues 350 to 361 (QQQQQQQQQQQQ).

Belongs to the SRY family. In terms of assembly, interacts with KPNB1, ZNF208 isoform KRAB-O, PARP1 and SLC9A3R2. The interaction with KPNB1 is sensitive to dissociation by Ran in the GTP-bound form. Interaction with PARP1 impaired its DNA-binding activity. Interacts with CALM, EP300, HDAC3 and WT1. The interaction with EP300 modulates its DNA-binding activity. In terms of processing, degraded due to the presence of a degron at the C-terminus that promotes its degradation. Phosphorylated on serine residues by PKA. Phosphorylation by PKA enhances its DNA-binding activity and stimulates transcription repression. Post-translationally, acetylation of Lys-81 contributes to its nuclear localization and enhances its interaction with KPNB1. In terms of processing, poly-ADP-ribosylated by PARP1. ADP-ribosylation reduces its DNA-binding activity. In terms of tissue distribution, expressed in gonadal somatic pre-Sertoli cells. Expressed in the substantia nigra of the brain (at protein level). Expressed in diencephalon, cortex, the substantia nigra of the midbrain and the medial mammillary bodies of the hypothalamus of male, but not female. As to expression, expressed in gonadal somatic pre-Sertoli cells. While it is expressed at lower level compared to isoform Sry-S, this form is more stable and constitutes the predominant protein product of the Sry locus in XY gonads (at protein level).

It localises to the nucleus speckle. The protein resides in the cytoplasm. The protein localises to the nucleus. In terms of biological role, transcriptional regulator that controls a genetic switch in male development. It is necessary and sufficient for initiating male sex determination by directing the development of supporting cell precursors (pre-Sertoli cells) as Sertoli rather than granulosa cells. Involved in different aspects of gene regulation including promoter activation or repression. Binds to the DNA consensus sequence 5'-[AT]AACAA[AT]-3'. SRY HMG box recognizes DNA by partial intercalation in the minor groove and promotes DNA bending. Also involved in pre-mRNA splicing. In male adult brain involved in the maintenance of motor functions of dopaminergic neurons. Functionally, constitutes the major isoform, which is necessary and sufficient for initiating male sex determination. Constitutes a minor isoform, which is unstable due to the presence of a degron at the C-terminus that promotes its degradation. Not necessary and sufficient for initiating male sex determination. The sequence is that of Sex-determining region Y protein from Mus musculus (Mouse).